The sequence spans 420 residues: Protein disulfide isomerase CRELD1 (420 aa).

Positions 1–29 are cleaved as a signal peptide; sequence MAPWPPKGLVPAMLWGLSLFLNLPGPIWL. The Extracellular portion of the chain corresponds to 30–362; the sequence is QPSPPPQSSP…GFFSEMTEDE (333 aa). Positions 46–49 match the CXXC motif; the sequence is CHTC. Cys46 and Cys49 are joined by a disulfide. N-linked (GlcNAc...) asparagine glycosylation occurs at Asn79. An EGF-like 1 domain is found at 153-193; the sequence is LPCPGGTERPCGGYGQCEGEGTRGGSGHCDCQAGYGGEACG. Intrachain disulfides connect Cys155-Cys169, Cys163-Cys181, and Cys183-Cys192. Asn205 carries an N-linked (GlcNAc...) asparagine glycan. 2 FU repeats span residues 208–256 and 268–315; these read HLVC…GANC and SYEC…EVCP. Residues 278–281 carry the CXXC motif; it reads CLGC. 4 cysteine pairs are disulfide-bonded: Cys278–Cys281, Cys309–Cys321, Cys314–Cys330, and Cys332–Cys343. In terms of domain architecture, EGF-like 2; calcium-binding spans 305 to 344; it reads DVDECETEVCPGENKQCENTEGGYRCICAEGYKQMEGICV. Residues 363-383 form a helical membrane-spanning segment; that stretch reads LVVLQQMFFGIIICALATLAA. Residue Lys384 is a topological domain, cytoplasmic. Residues 385 to 405 form a helical membrane-spanning segment; that stretch reads GDLVFTAIFIGAVAAMTGYWL. Residues 406–420 lie on the Extracellular side of the membrane; sequence SERSDRVLEGFIKGR.

It belongs to the CRELD family. Highly expressed in fetal lung, liver, kidney, adult heart, brain and skeletal muscle. Weakly expressed in placenta, fetal brain, and adult lung, liver, kidney and pancreas.

It localises to the membrane. It catalyses the reaction Catalyzes the rearrangement of -S-S- bonds in proteins.. Protein disulfide isomerase. Promotes the localization of acetylcholine receptors (AChRs) to the plasma membrane. The chain is Protein disulfide isomerase CRELD1 (CRELD1) from Homo sapiens (Human).